Here is a 255-residue protein sequence, read N- to C-terminus: Aliphatic sulfonates import ATP-binding protein SsuB (255 aa).

The ABC transporter domain occupies 12–233 (LLLNAVSKHY…RLGSVRLAEL (222 aa)). 44-51 (GRSGGGKS) serves as a coordination point for ATP.

Belongs to the ABC transporter superfamily. Aliphatic sulfonates importer (TC 3.A.1.17.2) family. The complex is composed of two ATP-binding proteins (SsuB), two transmembrane proteins (SsuC) and a solute-binding protein (SsuA).

It is found in the cell inner membrane. It carries out the reaction ATP + H2O + aliphatic sulfonate-[sulfonate-binding protein]Side 1 = ADP + phosphate + aliphatic sulfonateSide 2 + [sulfonate-binding protein]Side 1.. Part of the ABC transporter complex SsuABC involved in aliphatic sulfonates import. Responsible for energy coupling to the transport system. The protein is Aliphatic sulfonates import ATP-binding protein SsuB of Escherichia coli (strain K12).